We begin with the raw amino-acid sequence, 53 residues long: Small ribosomal subunit protein uS14 (53 aa).

Cys-17, Cys-20, Cys-36, and Cys-39 together coordinate Zn(2+).

The protein belongs to the universal ribosomal protein uS14 family. Zinc-binding uS14 subfamily. As to quaternary structure, part of the 30S ribosomal subunit. Requires Zn(2+) as cofactor.

Binds 16S rRNA, required for the assembly of 30S particles. The polypeptide is Small ribosomal subunit protein uS14 (Methanococcus maripaludis (strain DSM 14266 / JCM 13030 / NBRC 101832 / S2 / LL)).